A 296-amino-acid chain; its full sequence is Cytidine deaminase (296 aa).

2 consecutive CMP/dCMP-type deaminase domains span residues 47–167 (TEAE…FGPK) and 186–296 (DSAD…IDPV). Residue 88–90 (NLE) participates in substrate binding. H101 provides a ligand contact to Zn(2+). The active-site Proton donor is E103. Zn(2+) is bound by residues C128 and C131.

The protein belongs to the cytidine and deoxycytidylate deaminase family. In terms of assembly, homodimer. Zn(2+) serves as cofactor.

The enzyme catalyses cytidine + H2O + H(+) = uridine + NH4(+). It catalyses the reaction 2'-deoxycytidine + H2O + H(+) = 2'-deoxyuridine + NH4(+). In terms of biological role, this enzyme scavenges exogenous and endogenous cytidine and 2'-deoxycytidine for UMP synthesis. This is Cytidine deaminase from Shewanella baltica (strain OS155 / ATCC BAA-1091).